A 481-amino-acid chain; its full sequence is Protein nucleotidyltransferase YdiU (481 aa).

ATP-binding residues include glycine 85, glycine 87, arginine 88, lysine 108, aspartate 120, glycine 121, arginine 172, and arginine 179. Aspartate 248 acts as the Proton acceptor in catalysis. Residues asparagine 249 and aspartate 258 each contribute to the Mg(2+) site. Aspartate 258 provides a ligand contact to ATP.

This sequence belongs to the SELO family. It depends on Mg(2+) as a cofactor. The cofactor is Mn(2+).

The catalysed reaction is L-seryl-[protein] + ATP = 3-O-(5'-adenylyl)-L-seryl-[protein] + diphosphate. It catalyses the reaction L-threonyl-[protein] + ATP = 3-O-(5'-adenylyl)-L-threonyl-[protein] + diphosphate. The enzyme catalyses L-tyrosyl-[protein] + ATP = O-(5'-adenylyl)-L-tyrosyl-[protein] + diphosphate. It carries out the reaction L-histidyl-[protein] + UTP = N(tele)-(5'-uridylyl)-L-histidyl-[protein] + diphosphate. The catalysed reaction is L-seryl-[protein] + UTP = O-(5'-uridylyl)-L-seryl-[protein] + diphosphate. It catalyses the reaction L-tyrosyl-[protein] + UTP = O-(5'-uridylyl)-L-tyrosyl-[protein] + diphosphate. In terms of biological role, nucleotidyltransferase involved in the post-translational modification of proteins. It can catalyze the addition of adenosine monophosphate (AMP) or uridine monophosphate (UMP) to a protein, resulting in modifications known as AMPylation and UMPylation. The chain is Protein nucleotidyltransferase YdiU from Cereibacter sphaeroides (strain ATCC 17023 / DSM 158 / JCM 6121 / CCUG 31486 / LMG 2827 / NBRC 12203 / NCIMB 8253 / ATH 2.4.1.) (Rhodobacter sphaeroides).